Reading from the N-terminus, the 220-residue chain is MAISSVENGVARRGLMVVISSPSGAGKSTIARLLLEDPKMKLSLSISVTTRQRRPSEIDGVHYHFITIREFERLRDNDELIEWAEVHGNFYGTLRETAEIALADGQDMLFDIDWQGADQLQAKMPADVVSIFILPPTMRELQQRLNRRAEDTAEVIETRLQNARFEIQKWVKYDYIVINEDLDRSYAAIKSIINAERLRRDRRPGLFDFVTGLLEEDPGM.

Residues 14-194 (GLMVVISSPS…SYAAIKSIIN (181 aa)) enclose the Guanylate kinase-like domain. Residue 21-28 (SPSGAGKS) participates in ATP binding.

Belongs to the guanylate kinase family.

Its subcellular location is the cytoplasm. The enzyme catalyses GMP + ATP = GDP + ADP. Its function is as follows. Essential for recycling GMP and indirectly, cGMP. This chain is Guanylate kinase, found in Brucella abortus (strain 2308).